Here is a 204-residue protein sequence, read N- to C-terminus: Holliday junction branch migration complex subunit RuvA (204 aa).

The tract at residues 1–63 (MIASLRGTVI…EDAMKLYGFI (63 aa)) is domain I. A domain II region spans residues 64–142 (DDQSREMFAL…AYTVGVVDDG (79 aa)). A flexible linker region spans residues 143–151 (APTAPTQGV). A domain III region spans residues 152–204 (APVVVVDQVTQALTGLGFTEKQADDAVAAVLSADPGLDTSAALRAALAKLGGK).

This sequence belongs to the RuvA family. In terms of assembly, homotetramer. Forms an RuvA(8)-RuvB(12)-Holliday junction (HJ) complex. HJ DNA is sandwiched between 2 RuvA tetramers; dsDNA enters through RuvA and exits via RuvB. An RuvB hexamer assembles on each DNA strand where it exits the tetramer. Each RuvB hexamer is contacted by two RuvA subunits (via domain III) on 2 adjacent RuvB subunits; this complex drives branch migration. In the full resolvosome a probable DNA-RuvA(4)-RuvB(12)-RuvC(2) complex forms which resolves the HJ.

Its subcellular location is the cytoplasm. The RuvA-RuvB-RuvC complex processes Holliday junction (HJ) DNA during genetic recombination and DNA repair, while the RuvA-RuvB complex plays an important role in the rescue of blocked DNA replication forks via replication fork reversal (RFR). RuvA specifically binds to HJ cruciform DNA, conferring on it an open structure. The RuvB hexamer acts as an ATP-dependent pump, pulling dsDNA into and through the RuvAB complex. HJ branch migration allows RuvC to scan DNA until it finds its consensus sequence, where it cleaves and resolves the cruciform DNA. The chain is Holliday junction branch migration complex subunit RuvA from Corynebacterium efficiens (strain DSM 44549 / YS-314 / AJ 12310 / JCM 11189 / NBRC 100395).